Reading from the N-terminus, the 320-residue chain is Ferrochelatase (320 aa).

Fe cation contacts are provided by His194 and Glu275.

This sequence belongs to the ferrochelatase family. Monomer.

It is found in the cytoplasm. It carries out the reaction heme b + 2 H(+) = protoporphyrin IX + Fe(2+). It functions in the pathway porphyrin-containing compound metabolism; protoheme biosynthesis; protoheme from protoporphyrin-IX: step 1/1. In terms of biological role, catalyzes the ferrous insertion into protoporphyrin IX. This chain is Ferrochelatase, found in Shigella boydii serotype 4 (strain Sb227).